A 318-amino-acid chain; its full sequence is NADH-ubiquinone oxidoreductase chain 1 (318 aa).

8 consecutive transmembrane segments (helical) span residues 2–22 (LLTNILCLMMPILLAVAFLTL), 69–89 (LMFIIAPTLAFTLALSLWAPL), 102–122 (ILFILAMSSLAVHSILWSGWA), 147–167 (AIILLSIMLINGSFTLSTLTI), 172–192 (MWLILPTWPLAMMWFISTLAE), 231–251 (IILMNALTATLFFGAFHNPLF), 253–273 (ELHTINLTTKTLILVFLFLWI), and 294–314 (LPLTLALCTWHMTMPISLAGI).

Belongs to the complex I subunit 1 family.

It is found in the mitochondrion inner membrane. It catalyses the reaction a ubiquinone + NADH + 5 H(+)(in) = a ubiquinol + NAD(+) + 4 H(+)(out). Functionally, core subunit of the mitochondrial membrane respiratory chain NADH dehydrogenase (Complex I) that is believed to belong to the minimal assembly required for catalysis. Complex I functions in the transfer of electrons from NADH to the respiratory chain. The immediate electron acceptor for the enzyme is believed to be ubiquinone. This is NADH-ubiquinone oxidoreductase chain 1 (MT-ND1) from Bradypus variegatus (Brown-throated three-fingered sloth).